Here is a 292-residue protein sequence, read N- to C-terminus: ATP phosphoribosyltransferase (292 aa).

Belongs to the ATP phosphoribosyltransferase family. Long subfamily. Requires Mg(2+) as cofactor.

The protein localises to the cytoplasm. The enzyme catalyses 1-(5-phospho-beta-D-ribosyl)-ATP + diphosphate = 5-phospho-alpha-D-ribose 1-diphosphate + ATP. The protein operates within amino-acid biosynthesis; L-histidine biosynthesis; L-histidine from 5-phospho-alpha-D-ribose 1-diphosphate: step 1/9. Feedback inhibited by histidine. Functionally, catalyzes the condensation of ATP and 5-phosphoribose 1-diphosphate to form N'-(5'-phosphoribosyl)-ATP (PR-ATP). Has a crucial role in the pathway because the rate of histidine biosynthesis seems to be controlled primarily by regulation of HisG enzymatic activity. This is ATP phosphoribosyltransferase from Gemmatimonas aurantiaca (strain DSM 14586 / JCM 11422 / NBRC 100505 / T-27).